A 1481-amino-acid chain; its full sequence is RNA helicase aquarius (1481 aa).

The tract at residues 1–416 (MAAPAQPKKI…LVSRHERRIS (416 aa)) is helical region with structural similarity to ARM repeat domains. The interval 417-1481 (QIQQLNQMPL…DAESVPTETE (1065 aa)) is required for assembly of the IB complex. Residues 754-773 (RSGKGKKRKDADGEEDDTEE) form a disordered region. Residues glutamine 801, glutamine 806, and 826 to 831 (GTGKTD) contribute to the ATP site. Position 1055 is an N6-acetyllysine (lysine 1055). A compositionally biased stretch (acidic residues) spans 1396-1414 (EEGEEGQSQETEMEAEEET). Positions 1396 to 1481 (EEGEEGQSQE…DAESVPTETE (86 aa)) are disordered. A compositionally biased stretch (polar residues) spans 1418-1448 (QGNLTPSPADASLSQETPAAQPDCSSQTEDT). A compositionally biased stretch (low complexity) spans 1455–1468 (ATAAEPVSAAAEAA).

The protein belongs to the CWF11 family. As to quaternary structure, identified in the spliceosome C complex. Component of the XAB2 complex, a multimeric protein complex composed of XAB2, PRPF19, AQR, ZNF830, ISY1, and PPIE. Identified in a pentameric intron-binding (IB) complex composed of AQR, XAB2, ISY1, ZNF830 and PPIE that is incorporated into the spliceosome as a preassembled complex. The IB complex does not contain PRPF19. Within the spliceosome, interacts with SNRPA1, SF3B1, SF3B3, SF3A1 and SF3A2.

The protein resides in the nucleus. Its subcellular location is the nucleoplasm. It catalyses the reaction ATP + H2O = ADP + phosphate + H(+). Involved in pre-mRNA splicing as component of the spliceosome. Intron-binding spliceosomal protein required to link pre-mRNA splicing and snoRNP (small nucleolar ribonucleoprotein) biogenesis. Plays a key role in position-dependent assembly of intron-encoded box C/D small snoRNP, splicing being required for snoRNP assembly. May act by helping the folding of the snoRNA sequence. Binds to intron of pre-mRNAs in a sequence-independent manner, contacting the region between snoRNA and the branchpoint of introns (40 nucleotides upstream of the branchpoint) during the late stages of splicing. Has ATP-dependent RNA helicase activity and can unwind double-stranded RNA molecules with a 3' overhang (in vitro). The sequence is that of RNA helicase aquarius (Aqr) from Mus musculus (Mouse).